Reading from the N-terminus, the 312-residue chain is Acetylglutamate kinase (312 aa).

Residues glycine 76–glycine 77, arginine 98, and asparagine 199 each bind substrate.

Belongs to the acetylglutamate kinase family. ArgB subfamily.

It localises to the cytoplasm. It catalyses the reaction N-acetyl-L-glutamate + ATP = N-acetyl-L-glutamyl 5-phosphate + ADP. The protein operates within amino-acid biosynthesis; L-arginine biosynthesis; N(2)-acetyl-L-ornithine from L-glutamate: step 2/4. In terms of biological role, catalyzes the ATP-dependent phosphorylation of N-acetyl-L-glutamate. The sequence is that of Acetylglutamate kinase from Beutenbergia cavernae (strain ATCC BAA-8 / DSM 12333 / CCUG 43141 / JCM 11478 / NBRC 16432 / NCIMB 13614 / HKI 0122).